We begin with the raw amino-acid sequence, 266 residues long: Undecaprenyl-diphosphatase (266 aa).

7 helical membrane-spanning segments follow: residues 39–59 (PGSS…VWYF), 86–106 (SIFI…LFVP), 112–132 (VLRS…FMYL), 153–173 (LIGF…GITI), 189–209 (FSFL…FIFS), 216–236 (IGFL…LLAI), and 246–266 (NGLK…LLNL).

Belongs to the UppP family.

It localises to the cell inner membrane. The catalysed reaction is di-trans,octa-cis-undecaprenyl diphosphate + H2O = di-trans,octa-cis-undecaprenyl phosphate + phosphate + H(+). Functionally, catalyzes the dephosphorylation of undecaprenyl diphosphate (UPP). Confers resistance to bacitracin. The protein is Undecaprenyl-diphosphatase of Prochlorococcus marinus (strain MIT 9215).